Here is a 285-residue protein sequence, read N- to C-terminus: Small ribosomal subunit protein uS3 (285 aa).

The 69-residue stretch at 39 to 107 folds into the KH type-2 domain; the sequence is VREFLKKKLK…PVAVNIEEVR (69 aa). Positions 211–285 are disordered; it reads GDAPVMRGED…RAAPPAAKGE (75 aa). Positions 217-241 are enriched in basic and acidic residues; it reads RGEDRPEDDRRRRNPRGDRPGDRRG. Residues 242 to 255 show a composition bias toward gly residues; it reads PGAGRGGPGAGRGP. Low complexity-rich tracts occupy residues 256–267 and 276–285; these read ADGASAAPSGDA and RAAPPAAKGE.

Belongs to the universal ribosomal protein uS3 family. Part of the 30S ribosomal subunit. Forms a tight complex with proteins S10 and S14.

In terms of biological role, binds the lower part of the 30S subunit head. Binds mRNA in the 70S ribosome, positioning it for translation. This is Small ribosomal subunit protein uS3 from Leptothrix cholodnii (strain ATCC 51168 / LMG 8142 / SP-6) (Leptothrix discophora (strain SP-6)).